An 810-amino-acid polypeptide reads, in one-letter code: Plasminogen (810 aa).

An N-terminal signal peptide occupies residues 1–19; the sequence is MEHKEVVLLLLLFLKSGQG. Residues 20–98 form the PAN domain; that stretch reads EPLDDYVNTK…RDVVLFEKKV (79 aa). 12 cysteine pairs are disulfide-bonded: Cys-49/Cys-73, Cys-53/Cys-61, Cys-103/Cys-181, Cys-124/Cys-164, Cys-152/Cys-176, Cys-185/Cys-262, Cys-188/Cys-316, Cys-206/Cys-245, Cys-234/Cys-257, Cys-275/Cys-352, Cys-296/Cys-335, and Cys-324/Cys-347. Kringle domains follow at residues 103 to 181, 184 to 262, and 275 to 352; these read CKTG…IPEC, ECMH…IPRC, and CLKG…IPSC. The span at 125 to 141 shows a compositional bias: polar residues; it reads QKWSSTSPHRPTFSPAT. The interval 125 to 145 is disordered; it reads QKWSSTSPHRPTFSPATHPSE. 3 residues coordinate L-lysine: Thr-136, Asp-158, and Arg-172. A glycan (O-linked (GalNAc...) threonine) is linked at Thr-365. 9 disulfides stabilise this stretch: Cys-377-Cys-454, Cys-398-Cys-437, Cys-426-Cys-449, Cys-481-Cys-560, Cys-502-Cys-543, Cys-531-Cys-555, Cys-567-Cys-685, Cys-577-Cys-585, and Cys-607-Cys-623. 2 Kringle domains span residues 377-454 and 481-560; these read CYHG…LKKC and CMFG…VPQC. L-lysine is bound by residues Asp-432 and Arg-445. The region spanning 581–808 is the Peptidase S1 domain; it reads VVGGCVAYPH…FVTWIEGVMR (228 aa). Ser-597 is subject to Phosphoserine. Catalysis depends on charge relay system residues His-622 and Asp-665. Ser-688 bears the Phosphoserine mark. Cystine bridges form between Cys-699–Cys-766, Cys-729–Cys-745, and Cys-756–Cys-784. Ser-760 serves as the catalytic Charge relay system.

It belongs to the peptidase S1 family. Plasminogen subfamily. As to quaternary structure, interacts with CSPG4 and AMOT. Interacts (via the Kringle domains) with HRG; the interaction tethers PLG to the cell surface and enhances its activation. Interacts (via Kringle 4 domain) with ADA; the interaction stimulates PLG activation when in complex with DPP4. Angiostatin: Interacts with ATP5F1A; the interaction inhibits most of the angiogenic effects of angiostatin. In the presence of the inhibitor, the activation involves only cleavage after Arg-580, yielding two chains held together by two disulfide bonds. In the absence of the inhibitor, the activation involves additionally the removal of the activation peptide.

It localises to the secreted. The catalysed reaction is Preferential cleavage: Lys-|-Xaa &gt; Arg-|-Xaa, higher selectivity than trypsin. Converts fibrin into soluble products.. Its activity is regulated as follows. Converted into plasmin by plasminogen activators, both plasminogen and its activator being bound to fibrin. Activated with catalytic amounts of streptokinase. Its function is as follows. Plasmin dissolves the fibrin of blood clots and acts as a proteolytic factor in a variety of other processes including embryonic development, tissue remodeling, tumor invasion, and inflammation. In ovulation, weakens the walls of the Graafian follicle. It activates the urokinase-type plasminogen activator, collagenases and several complement zymogens, such as C1, C4 and C5. Cleavage of fibronectin and laminin leads to cell detachment and apoptosis. Also cleaves fibrin, thrombospondin and von Willebrand factor. Its role in tissue remodeling and tumor invasion may be modulated by CSPG4. Binds to cells. This Macaca mulatta (Rhesus macaque) protein is Plasminogen (PLG).